Consider the following 206-residue polypeptide: Large ribosomal subunit protein uL4 (206 aa).

The tract at residues 63–97 (MYKQKGTGRARHHSARAPQFRGGGKAHGPVVRSHE) is disordered. The span at 64-77 (YKQKGTGRARHHSA) shows a compositional bias: basic residues.

It belongs to the universal ribosomal protein uL4 family. Part of the 50S ribosomal subunit.

In terms of biological role, one of the primary rRNA binding proteins, this protein initially binds near the 5'-end of the 23S rRNA. It is important during the early stages of 50S assembly. It makes multiple contacts with different domains of the 23S rRNA in the assembled 50S subunit and ribosome. Functionally, forms part of the polypeptide exit tunnel. The chain is Large ribosomal subunit protein uL4 from Rhizobium rhizogenes (strain K84 / ATCC BAA-868) (Agrobacterium radiobacter).